Here is a 559-residue protein sequence, read N- to C-terminus: Formate--tetrahydrofolate ligase (559 aa).

An ATP-binding site is contributed by 68 to 75 (TPAGEGKS).

Belongs to the formate--tetrahydrofolate ligase family.

The catalysed reaction is (6S)-5,6,7,8-tetrahydrofolate + formate + ATP = (6R)-10-formyltetrahydrofolate + ADP + phosphate. Its pathway is one-carbon metabolism; tetrahydrofolate interconversion. The polypeptide is Formate--tetrahydrofolate ligase (Lactobacillus gasseri (strain ATCC 33323 / DSM 20243 / BCRC 14619 / CIP 102991 / JCM 1131 / KCTC 3163 / NCIMB 11718 / NCTC 13722 / AM63)).